The sequence spans 370 residues: UDP-galactose transporter homolog 1 (370 aa).

A run of 10 helical transmembrane segments spans residues 22–42 (ALTL…WSIL), 62–82 (IIIN…YNYV), 115–135 (CNVL…SPIG), 145–165 (LAYL…HFIF), 175–195 (YLVA…HVTT), 204–224 (TLLG…TNST), 242–262 (LMSL…IIFH), 280–300 (LIDI…IFII), 307–327 (IILI…SVIL), and 333–353 (SWEQ…EAFI).

Belongs to the nucleotide-sugar transporter family. SLC35B subfamily.

Its subcellular location is the endoplasmic reticulum membrane. Its function is as follows. May be involved in specific transport of UDP-Gal from the cytosol to the Golgi lumen. Involved in the maintenance of optimal conditions for the folding of secretory pathway proteins in the endoplasmic reticulum. The polypeptide is UDP-galactose transporter homolog 1 (HUT1) (Candida albicans (strain SC5314 / ATCC MYA-2876) (Yeast)).